A 114-amino-acid chain; its full sequence is T-cell leukemia/lymphoma protein 1A (114 aa).

It belongs to the TCL1 family. As to quaternary structure, homodimer. Interacts with AKT1, AKT2 and AKT3 (via PH domain). Interacts with PNPT1; the interaction has no effect on PNPT1 exonuclease activity. In terms of tissue distribution, restricted in the T-cell lineage to immature thymocytes and activated peripheral lymphocytes. Preferentially expressed early in T- and B-lymphocyte differentiation.

The protein resides in the cytoplasm. It is found in the nucleus. The protein localises to the microsome. It localises to the endoplasmic reticulum. In terms of biological role, enhances the phosphorylation and activation of AKT1, AKT2 and AKT3. Promotes nuclear translocation of AKT1. Enhances cell proliferation, stabilizes mitochondrial membrane potential and promotes cell survival. This Homo sapiens (Human) protein is T-cell leukemia/lymphoma protein 1A (TCL1A).